A 434-amino-acid chain; its full sequence is Tubulin gamma chain (434 aa).

Residue 135-141 (AGGTGSG) coordinates GTP.

The protein belongs to the tubulin family.

It is found in the cytoplasm. It localises to the cytoskeleton. Its subcellular location is the microtubule organizing center. The protein localises to the spindle pole body. Functionally, tubulin is the major constituent of microtubules. The gamma chain is found at microtubule organizing centers (MTOC) such as the spindle poles or the centrosome, suggesting that it is involved in the minus-end nucleation of microtubule assembly. In Encephalitozoon cuniculi (strain GB-M1) (Microsporidian parasite), this protein is Tubulin gamma chain (TUB4).